The following is a 405-amino-acid chain: Putative polysaccharide ligase RT0347 (405 aa).

Helical transmembrane passes span Ile23–Ile43, Leu77–Val97, Ile120–Ile140, Phe156–Ile178, Ile201–Ala221, Ile227–Ala247, Leu270–Phe290, Ile322–Tyr342, Ile353–Tyr375, and Ile377–Val397.

This sequence belongs to the O-antigen ligase family.

It is found in the membrane. The chain is Putative polysaccharide ligase RT0347 from Rickettsia typhi (strain ATCC VR-144 / Wilmington).